The chain runs to 224 residues: Steroid receptor RNA activator 1 (224 aa).

Disordered regions lie at residues 1-90 (MAEL…EPTS) and 201-224 (AANE…QQAS). 3 positions are modified to phosphoserine: Ser-48, Ser-57, and Ser-75. Positions 58–76 (PGPPPMGPPPPSSKAPRSP) are enriched in pro residues. Over residues 201-215 (AANEEKSAATAEKNH) the composition is skewed to basic and acidic residues.

The protein belongs to the SRA1 family. SRA1 RNA exists in a ribonucleoprotein complex containing NCOA1. The RNA also forms a complex with PUS1 and RARG in the nucleus. Interacts with AR. In terms of tissue distribution, highly expressed in liver and skeletal muscle and to a lesser extent in brain. Also expressed in both normal and tumorigenic breast epithelial cell lines. Significantly up-regulated in human tumors of the breast, ovary, and uterus.

It is found in the nucleus. It localises to the cytoplasm. Functional RNA which acts as a transcriptional coactivator that selectively enhances steroid receptor-mediated transactivation ligand-independently through a mechanism involving the modulating N-terminal domain (AF-1) of steroid receptors. Also mediates transcriptional coactivation of steroid receptors ligand-dependently through the steroid-binding domain (AF-2). Enhances cellular proliferation and differentiation and promotes apoptosis in vivo. May play a role in tumorigenesis. In Homo sapiens (Human), this protein is Steroid receptor RNA activator 1.